The primary structure comprises 621 residues: MALLQISEPGMSPAPHQRRLAVGIDLGTTNSLVAAVRSSIPEVLGDERGRALLPSVVRYLPDRTAHIGYRAQEEAVRDPKNTIVSVKRFMGRGLRDVANIEHSPYDFVDAPGMLQIKTAAGVKSPVEISAEILATLRQRAEDTLGDDLVGAVITVPAYFDEAQRQATKDAARLAGLEVLRLLNEPTAAAIAYGLDNASEGIYAVYDLGGGTFDISVLKLTQGVFEVLATGGDSALGGDDFDQRLLCWIVEQASLQPLSAQDMRLLMVRARAAKEALSESDSTVIDAVLESGEIVHLTLTVEIFDQVTAHLVQKTLAPVRKALRDAGVAPDEVKGVVLVGGATRMPSIRKAVGDYFGQTPLTNLDPDRVVALGAAMQANLLAGNHAPGEDWLLLDVIPLSLGVETMGGLVEKIIPRNSTIPVARAQEFTTFKDGQTAMAIHVLQGERELASDCRSLARFELRGIPPMVAGAARIRVTYQVDADGLLSVTARETHSGVEASVTVKPSYGLADDDIARMLQESFREAEHDMKSRALAEERVEADRLVEATQRALETDGDLLSAEERTAVEALMATVREIATGEDHHAIHAAVEKLSHGTDEFAARRMDRSIKSALAGRKVQELG.

It belongs to the heat shock protein 70 family.

Functionally, chaperone involved in the maturation of iron-sulfur cluster-containing proteins. Has a low intrinsic ATPase activity which is markedly stimulated by HscB. This chain is Chaperone protein HscA homolog, found in Cupriavidus necator (strain ATCC 17699 / DSM 428 / KCTC 22496 / NCIMB 10442 / H16 / Stanier 337) (Ralstonia eutropha).